The chain runs to 249 residues: Major phosphate-irrepressible acid phosphatase (249 aa).

The signal sequence occupies residues 1-20 (MKKNIIAGCLFSLFSLSALA).

Belongs to the class A bacterial acid phosphatase family. In terms of assembly, homotetramer.

The protein resides in the periplasm. The catalysed reaction is a phosphate monoester + H2O = an alcohol + phosphate. The sequence is that of Major phosphate-irrepressible acid phosphatase (phoC) from Morganella morganii (Proteus morganii).